Consider the following 535-residue polypeptide: Cytochrome P450 4c3 (535 aa).

Residues Glu342 and Cys481 each coordinate heme.

Belongs to the cytochrome P450 family. The cofactor is heme.

The protein localises to the endoplasmic reticulum membrane. It is found in the microsome membrane. Its function is as follows. May be involved in the metabolism of insect hormones and in the breakdown of synthetic insecticides. This is Cytochrome P450 4c3 (Cyp4c3) from Drosophila melanogaster (Fruit fly).